The following is a 208-amino-acid chain: GTP cyclohydrolase 1 (208 aa).

Positions 89, 92, and 163 each coordinate Zn(2+).

Belongs to the GTP cyclohydrolase I family. As to quaternary structure, homomer.

It carries out the reaction GTP + H2O = 7,8-dihydroneopterin 3'-triphosphate + formate + H(+). It participates in cofactor biosynthesis; 7,8-dihydroneopterin triphosphate biosynthesis; 7,8-dihydroneopterin triphosphate from GTP: step 1/1. This is GTP cyclohydrolase 1 from Saccharolobus islandicus (strain Y.N.15.51 / Yellowstone #2) (Sulfolobus islandicus).